A 466-amino-acid polypeptide reads, in one-letter code: MAKTLYEKLFDAHVVYEAENETPLLYIDRHLVHEVTSPQAFDGLRAHGRPVRQPGKTFATMDHNVSTQTKDINACGEMARIQMQELIKNCKEFGVELYDLNHPYQGIVHVMGPEQGVTLPGMTIVCGDSHTATHGAFGALAFGIGTSEVEHVLATQTLKQGRAKTMKIEVQGKAAPGITAKDIVLAIIGKTGSAGGTGHVVEFCGEAIRDLSMEGRMTLCNMAIEMGAKAGLVAPDETTFNYVKGRLHAPKGKDFDDAVAYWKTLQTDEGATFDTVVTLQAEEMSPQVTWGTNPGQVISVNDNIPDPASFADPVERASAEKALAYMGLKPGIPLTEVAIDKVFIGSCTNSRIEDLRAAAEIAKGRKVAPGVQALVVPGSGPVKAQAEAEGLDKIFIEAGFEWRLPGCSMCLAMNNDRLNPGERCASTSNRNFEGRQGRGGRTHLVSPAMAAAAAVTGHFADIRNIK.

Residues cysteine 347, cysteine 407, and cysteine 410 each coordinate [4Fe-4S] cluster.

The protein belongs to the aconitase/IPM isomerase family. LeuC type 1 subfamily. Heterodimer of LeuC and LeuD. Requires [4Fe-4S] cluster as cofactor.

It catalyses the reaction (2R,3S)-3-isopropylmalate = (2S)-2-isopropylmalate. It functions in the pathway amino-acid biosynthesis; L-leucine biosynthesis; L-leucine from 3-methyl-2-oxobutanoate: step 2/4. Catalyzes the isomerization between 2-isopropylmalate and 3-isopropylmalate, via the formation of 2-isopropylmaleate. This Escherichia coli O127:H6 (strain E2348/69 / EPEC) protein is 3-isopropylmalate dehydratase large subunit.